The following is a 320-amino-acid chain: o-succinylbenzoate synthase (320 aa).

The Proton donor role is filled by Lys133. Residues Asp161, Glu190, and Asp213 each contribute to the Mg(2+) site. Catalysis depends on Lys235, which acts as the Proton acceptor.

It belongs to the mandelate racemase/muconate lactonizing enzyme family. MenC type 1 subfamily. A divalent metal cation serves as cofactor.

It carries out the reaction (1R,6R)-6-hydroxy-2-succinyl-cyclohexa-2,4-diene-1-carboxylate = 2-succinylbenzoate + H2O. It functions in the pathway quinol/quinone metabolism; 1,4-dihydroxy-2-naphthoate biosynthesis; 1,4-dihydroxy-2-naphthoate from chorismate: step 4/7. Its pathway is quinol/quinone metabolism; menaquinone biosynthesis. Functionally, converts 2-succinyl-6-hydroxy-2,4-cyclohexadiene-1-carboxylate (SHCHC) to 2-succinylbenzoate (OSB). The protein is o-succinylbenzoate synthase of Salmonella newport (strain SL254).